Here is a 402-residue protein sequence, read N- to C-terminus: Serine/threonine transporter SstT (402 aa).

8 consecutive transmembrane segments (helical) span residues 17–37, 44–64, 78–98, 138–158, 179–199, 212–232, 295–315, and 336–356; these read IAIGVVIGAILGLLIPKITVI, FVGGLKAIAPLLVSALVANAL, IIVLYLFGTFAAALTAVISHY, ALSQANYIGVLLWAVVFGFAM, IVRWIINLAPFGILGLVFDTI, VLILVLVGTMTFVALVINPII, MAGAAVTINVLTLAAVTTLGI, and ASGIAGGSLLLVPVACSLFGI.

Belongs to the dicarboxylate/amino acid:cation symporter (DAACS) (TC 2.A.23) family.

It localises to the cell membrane. The enzyme catalyses L-serine(in) + Na(+)(in) = L-serine(out) + Na(+)(out). It catalyses the reaction L-threonine(in) + Na(+)(in) = L-threonine(out) + Na(+)(out). In terms of biological role, involved in the import of serine and threonine into the cell, with the concomitant import of sodium (symport system). This is Serine/threonine transporter SstT from Streptococcus thermophilus (strain CNRZ 1066).